Consider the following 431-residue polypeptide: Homogentisate 1,2-dioxygenase (431 aa).

Residue H286 is the Proton acceptor of the active site. Fe cation is bound by residues H329 and E335. Y344 and H365 together coordinate homogentisate. H365 is a binding site for Fe cation.

The protein belongs to the homogentisate dioxygenase family. As to quaternary structure, hexamer; dimer of trimers. The cofactor is Fe cation.

The catalysed reaction is homogentisate + O2 = 4-maleylacetoacetate + H(+). Its pathway is amino-acid degradation; L-phenylalanine degradation; acetoacetate and fumarate from L-phenylalanine: step 4/6. Its function is as follows. Involved in the catabolism of homogentisate (2,5-dihydroxyphenylacetate or 2,5-OH-PhAc), a central intermediate in the degradation of phenylalanine and tyrosine. Catalyzes the oxidative ring cleavage of the aromatic ring of homogentisate to yield maleylacetoacetate. In Pseudomonas fluorescens (strain Pf0-1), this protein is Homogentisate 1,2-dioxygenase.